The chain runs to 215 residues: ATP-dependent dethiobiotin synthetase BioD (215 aa).

13–18 contacts ATP; that stretch reads DIGKTV. Position 17 (Thr-17) interacts with Mg(2+). Lys-38 is an active-site residue. Residue Thr-42 participates in substrate binding. ATP contacts are provided by residues Asp-50, 115–118, and 175–176; these read EGAG and NH. Mg(2+) contacts are provided by Asp-50 and Glu-115.

This sequence belongs to the dethiobiotin synthetase family. Homodimer. The cofactor is Mg(2+).

The protein localises to the cytoplasm. It carries out the reaction (7R,8S)-7,8-diammoniononanoate + CO2 + ATP = (4R,5S)-dethiobiotin + ADP + phosphate + 3 H(+). Its pathway is cofactor biosynthesis; biotin biosynthesis; biotin from 7,8-diaminononanoate: step 1/2. Its function is as follows. Catalyzes a mechanistically unusual reaction, the ATP-dependent insertion of CO2 between the N7 and N8 nitrogen atoms of 7,8-diaminopelargonic acid (DAPA, also called 7,8-diammoniononanoate) to form a ureido ring. The polypeptide is ATP-dependent dethiobiotin synthetase BioD (Neisseria gonorrhoeae (strain NCCP11945)).